Here is a 299-residue protein sequence, read N- to C-terminus: N-acetylaspartate synthetase (299 aa).

The span at 44-57 shows a compositional bias: pro residues; it reads AAPGPAAAPPPAAG. The segment at 44-70 is disordered; that stretch reads AAPGPAAAPPPAAGPQPHGGTGGAGPP. Residues 60-70 show a composition bias toward gly residues; that stretch reads PHGGTGGAGPP. The chain crosses the membrane as a helical span at residues 118-138; the sequence is YALLAALCFAVTRSLLLTCLV. The 138-residue stretch at 143–280 folds into the N-acetyltransferase domain; the sequence is LALRYYYSRK…VLPGMTLSLA (138 aa).

Belongs to the NAT8 family. In terms of tissue distribution, expressed in brain, kidney, liver and spleen. In brain, present in neurons but not in astrocytes (at protein level). Expressed in brain, thymus and spleen.

It is found in the cytoplasm. It localises to the microsome membrane. Its subcellular location is the mitochondrion membrane. The protein resides in the endoplasmic reticulum membrane. The catalysed reaction is L-aspartate + acetyl-CoA = N-acetyl-L-aspartate + CoA + H(+). Aminooxyacetic acid (AOAA) blocks its activity in both cytoplasm and mitochondria. Functionally, catalyzes the synthesis of N-acetylaspartate acid (NAA) from L-aspartate and acetyl-CoA. Promotes dopamine uptake by regulating TNF-alpha expression. Attenuates methamphetamine-induced inhibition of dopamine uptake. In Mus musculus (Mouse), this protein is N-acetylaspartate synthetase (Nat8l).